An 860-amino-acid polypeptide reads, in one-letter code: DNA mismatch repair protein MutS (860 aa).

625-632 is a binding site for ATP; that stretch reads GPNMGGKS.

This sequence belongs to the DNA mismatch repair MutS family.

In terms of biological role, this protein is involved in the repair of mismatches in DNA. It is possible that it carries out the mismatch recognition step. This protein has a weak ATPase activity. This chain is DNA mismatch repair protein MutS, found in Aeromonas hydrophila subsp. hydrophila (strain ATCC 7966 / DSM 30187 / BCRC 13018 / CCUG 14551 / JCM 1027 / KCTC 2358 / NCIMB 9240 / NCTC 8049).